A 327-amino-acid chain; its full sequence is Flotillin-like protein FloA (327 aa).

The helical transmembrane segment at 2-22 (IGLIIIVVIVLVALLLLFSFV) threads the bilayer. Positions 305–327 (ADTGMRNSINQRTNQKDDESPDK) are disordered. Positions 318–327 (NQKDDESPDK) are enriched in basic and acidic residues.

It belongs to the flotillin-like FloA family. In terms of assembly, homooligomerizes.

It localises to the cell membrane. It is found in the membrane raft. Its function is as follows. Found in functional membrane microdomains (FMM) that may be equivalent to eukaryotic membrane rafts. FMMs are highly dynamic and increase in number as cells age. Flotillins are thought to be important factors in membrane fluidity. The protein is Flotillin-like protein FloA of Staphylococcus saprophyticus subsp. saprophyticus (strain ATCC 15305 / DSM 20229 / NCIMB 8711 / NCTC 7292 / S-41).